The primary structure comprises 983 residues: Protein translocase subunit SecA (983 aa).

ATP is bound by residues Q83, 101–105, and D489; that span reads GEGKT. The tract at residues 948-983 is disordered; sequence ISSEEEDNNEKTNINNNEDLERTKGEAQQTAKNPNE. Residues 973-983 show a composition bias toward polar residues; the sequence is EAQQTAKNPNE.

Belongs to the SecA family. Monomer and homodimer. Part of the essential Sec protein translocation apparatus which comprises SecA, SecYEG and auxiliary proteins SecDF. Other proteins may also be involved.

The protein resides in the cell membrane. It localises to the cytoplasm. The enzyme catalyses ATP + H2O + cellular proteinSide 1 = ADP + phosphate + cellular proteinSide 2.. Its function is as follows. Part of the Sec protein translocase complex. Interacts with the SecYEG preprotein conducting channel. Has a central role in coupling the hydrolysis of ATP to the transfer of proteins into and across the cell membrane, serving as an ATP-driven molecular motor driving the stepwise translocation of polypeptide chains across the membrane. In Mesomycoplasma hyopneumoniae (strain 232) (Mycoplasma hyopneumoniae), this protein is Protein translocase subunit SecA.